The primary structure comprises 212 residues: MSAETGEKVVELLIPLEMYLQHGVHIGTKMVTNYMKRFVYKRRNIDGLAILDVRKIDQRIRVAAKFLSRFEPEKIMVVSVRQYGHKPVTMFAQFTGAKPVIGRFVPGTLTNPALEVYYEPDVILVTDTRMDQQAIVEAAEIGIPVVAICDTDNKTENVDLIIPGNNKGRKSLALLYWLLTRQVLVERGQLSPDAPEDQPAPVSEFETKVKMV.

The segment at 190–212 (LSPDAPEDQPAPVSEFETKVKMV) is disordered.

It belongs to the universal ribosomal protein uS2 family.

The chain is Small ribosomal subunit protein uS2 from Ignicoccus hospitalis (strain KIN4/I / DSM 18386 / JCM 14125).